The primary structure comprises 204 residues: Putative 3-methyladenine DNA glycosylase (204 aa).

Belongs to the DNA glycosylase MPG family.

In Mycobacterium sp. (strain KMS), this protein is Putative 3-methyladenine DNA glycosylase.